The chain runs to 203 residues: Urease accessory protein UreE (203 aa).

Residues 170 to 190 show a composition bias toward basic and acidic residues; that stretch reads EHHGHSHSRSHDHDHDHDHQH. A disordered region spans residues 170–203; it reads EHHGHSHSRSHDHDHDHDHQHGPSCSHGHHHGHR.

Belongs to the UreE family.

It is found in the cytoplasm. Functionally, involved in urease metallocenter assembly. Binds nickel. Probably functions as a nickel donor during metallocenter assembly. The chain is Urease accessory protein UreE from Burkholderia pseudomallei (strain 1710b).